The primary structure comprises 1266 residues: Rho GTPase-activating protein 29 (1266 aa).

Phosphoserine occurs at positions 171, 176, 179, and 190. In terms of domain architecture, F-BAR spans 192–462 (IELDNLLLKN…SAKLYDPGQE (271 aa)). Residues 296–418 (RKNEMEKQRK…EILTQLRTLV (123 aa)) are a coiled coil. The interval 482-501 (NVNKQMTNSPQTSGYEPADS) is disordered. Polar residues predominate over residues 483-495 (VNKQMTNSPQTSG). 3 positions are modified to phosphoserine: S501, S521, and S554. A compositionally biased stretch (low complexity) spans 542–561 (DSESTGGSSESRSLDSESIS). Residues 542 to 601 (DSESTGGSSESRSLDSESISPGDFHRKLPRTPSSGTMSSADDLDEREPPSPSEAGPNSLG) form a disordered region. The Phorbol-ester/DAG-type zinc finger occupies 614–659 (THKFRKLRSPTKCRDCDGIVMFPGVECEECLLVCHRKCLENLVIIC). One can recognise a Rho-GAP domain in the interval 673 to 888 (AEFIQVAKKE…FLITYSQKIF (216 aa)). 3 positions are modified to phosphoserine: S920, S956, and S1028. Disordered stretches follow at residues 1039-1081 (SSPT…KVNG), 1116-1157 (GLTV…ATAV), and 1209-1266 (KSDP…PQFV). Residues 1072-1081 (SNTTRSKVNG) are compositionally biased toward polar residues. Positions 1124–1136 (NRDHPGSKAHAEP) are enriched in basic and acidic residues. Residues S1149 and S1151 each carry the phosphoserine modification. Residues 1256–1266 (EDLEDEIPQFV) show a composition bias toward acidic residues. The interaction with PTPN13/PTPL1 stretch occupies residues 1263–1266 (PQFV).

In terms of assembly, interacts with PTPN13/PTPL1. Interacts with RAP2A via its coiled coil domain. Interacts with RASIP1.

In terms of biological role, GTPase activator for the Rho-type GTPases by converting them to an inactive GDP-bound state. Has strong activity toward RHOA, and weaker activity toward RAC1 and CDC42. May act as a specific effector of RAP2A to regulate Rho. In concert with RASIP1, suppresses RhoA signaling and dampens ROCK and MYH9 activities in endothelial cells and plays an essential role in blood vessel tubulogenesis. This chain is Rho GTPase-activating protein 29 (Arhgap29), found in Mus musculus (Mouse).